A 700-amino-acid chain; its full sequence is Polyribonucleotide nucleotidyltransferase (700 aa).

Aspartate 491 and aspartate 497 together coordinate Mg(2+). The KH domain occupies 558 to 617 (PNYAVIEINPDKIRDVIGKGGATIRQLTEETGAVIDIDDAGTIRIFGENKAATKAAIAKI). The S1 motif domain maps to 627-695 (GKTYEGTVAR…NRGRIKLTMK (69 aa)).

Belongs to the polyribonucleotide nucleotidyltransferase family. In terms of assembly, component of the RNA degradosome, which is a multiprotein complex involved in RNA processing and mRNA degradation. The cofactor is Mg(2+).

The protein resides in the cytoplasm. It catalyses the reaction RNA(n+1) + phosphate = RNA(n) + a ribonucleoside 5'-diphosphate. Functionally, involved in mRNA degradation. Catalyzes the phosphorolysis of single-stranded polyribonucleotides processively in the 3'- to 5'-direction. The chain is Polyribonucleotide nucleotidyltransferase from Psychrobacter arcticus (strain DSM 17307 / VKM B-2377 / 273-4).